We begin with the raw amino-acid sequence, 255 residues long: 3-deoxy-manno-octulosonate cytidylyltransferase (255 aa).

It belongs to the KdsB family.

The protein resides in the cytoplasm. It catalyses the reaction 3-deoxy-alpha-D-manno-oct-2-ulosonate + CTP = CMP-3-deoxy-beta-D-manno-octulosonate + diphosphate. The protein operates within nucleotide-sugar biosynthesis; CMP-3-deoxy-D-manno-octulosonate biosynthesis; CMP-3-deoxy-D-manno-octulosonate from 3-deoxy-D-manno-octulosonate and CTP: step 1/1. It participates in bacterial outer membrane biogenesis; lipopolysaccharide biosynthesis. In terms of biological role, activates KDO (a required 8-carbon sugar) for incorporation into bacterial lipopolysaccharide in Gram-negative bacteria. This is 3-deoxy-manno-octulosonate cytidylyltransferase from Pelobacter propionicus (strain DSM 2379 / NBRC 103807 / OttBd1).